The sequence spans 117 residues: Protein RALF-like 32 (117 aa).

A signal peptide spans 1–26 (MEIKPSRIFSTITIFFLCLLLAHVTS). Positions 27–64 (KASSSSLCNGSVAECSSMVETEEMSVIMESWSSQRLTE) are cleaved as a propeptide — removed in mature form. N-linked (GlcNAc...) asparagine glycosylation occurs at Asn35. The tract at residues 77-107 (RNQPACDGGKRGESYSTQCLPPPSNPYSRGC) is disordered. Cystine bridges form between Cys82/Cys95 and Cys107/Cys113.

This sequence belongs to the plant rapid alkalinization factor (RALF) family. In terms of processing, proteolytically cleaved, probably by S1P, a subtilisin-like serine protease (subtilase).

The protein localises to the secreted. Functionally, cell signaling peptide that may regulate plant stress, growth, and development. Mediates a rapid alkalinization of extracellular space by mediating a transient increase in the cytoplasmic Ca(2+) concentration leading to a calcium-dependent signaling events through a cell surface receptor and a concomitant activation of some intracellular mitogen-activated protein kinases. The protein is Protein RALF-like 32 (RALFL32) of Arabidopsis thaliana (Mouse-ear cress).